The sequence spans 498 residues: UDP-N-acetylmuramate--L-alanine ligase (498 aa).

Residue 122 to 128 (GTHGKTS) coordinates ATP.

The protein belongs to the MurCDEF family.

It localises to the cytoplasm. The catalysed reaction is UDP-N-acetyl-alpha-D-muramate + L-alanine + ATP = UDP-N-acetyl-alpha-D-muramoyl-L-alanine + ADP + phosphate + H(+). Its pathway is cell wall biogenesis; peptidoglycan biosynthesis. Functionally, cell wall formation. The sequence is that of UDP-N-acetylmuramate--L-alanine ligase from Corynebacterium jeikeium (strain K411).